The chain runs to 754 residues: 5-methyltetrahydropteroyltriglutamate--homocysteine methyltransferase (754 aa).

Residues 17–20 (RELK) and Lys-117 contribute to the 5-methyltetrahydropteroyltri-L-glutamate site. Residues 431–433 (IGS) and Glu-484 contribute to the L-homocysteine site. L-methionine is bound by residues 431–433 (IGS) and Glu-484. Residues 515-516 (RC) and Trp-561 each bind 5-methyltetrahydropteroyltri-L-glutamate. Asp-599 contributes to the L-homocysteine binding site. Asp-599 provides a ligand contact to L-methionine. Glu-605 lines the 5-methyltetrahydropteroyltri-L-glutamate pocket. The Zn(2+) site is built by His-641, Cys-643, and Glu-665. His-694 functions as the Proton donor in the catalytic mechanism. Cys-726 is a binding site for Zn(2+).

It belongs to the vitamin-B12 independent methionine synthase family. The cofactor is Zn(2+).

It catalyses the reaction 5-methyltetrahydropteroyltri-L-glutamate + L-homocysteine = tetrahydropteroyltri-L-glutamate + L-methionine. Its pathway is amino-acid biosynthesis; L-methionine biosynthesis via de novo pathway; L-methionine from L-homocysteine (MetE route): step 1/1. In terms of biological role, catalyzes the transfer of a methyl group from 5-methyltetrahydrofolate to homocysteine resulting in methionine formation. The sequence is that of 5-methyltetrahydropteroyltriglutamate--homocysteine methyltransferase from Salmonella choleraesuis (strain SC-B67).